The following is a 979-amino-acid chain: Protein SMAX1-LIKE 6 (979 aa).

The region spanning 8–190 is the Clp R domain; the sequence is ARECLTEEAA…PVTQLSSRFS (183 aa). Repeat regions lie at residues 12 to 86 and 100 to 190; these read LTEE…LDRL and VSNS…SRFS. Residues 833-837 carry the EAR motif; the sequence is LDLNL.

Belongs to the ClpA/ClpB family. Interacts with TPL/TPR in an EAR-motif dependent manner. Interacts with TPR3. Interacts with MAX2 and TPR2. Interacts with D14. The interaction with D14 occurs in the presence of (2'R) stereoisomers of strigolactones, but not (2'S) stereoisomers. Post-translationally, ubiquitinated upon strigolactone treatment. Probable proteolytic target of SCF(MAX2)-mediated stigolactone signaling. In terms of tissue distribution, detected in roots, seedlings and axillary branches. Expressed in the primary rosette buds and expanding leaves of adult rosettes, the vasculature of the hypocotyls, cotyledons, and mature roots, and in the midvein and petioles of young leaves.

It is found in the nucleus. Functionally, probable component of a transcriptional corepressor complex involved in branching control. Regulates cotyledon expansion and lateral root growth, but not germination or hypocotyl elongation. Promotes auxin transport and PIN1 accumulation in the stem and represses BRC1/TCP18 expression in axillary buds. In Arabidopsis thaliana (Mouse-ear cress), this protein is Protein SMAX1-LIKE 6.